Reading from the N-terminus, the 229-residue chain is Large ribosomal subunit protein uL1 (229 aa).

It belongs to the universal ribosomal protein uL1 family. Part of the 50S ribosomal subunit.

Binds directly to 23S rRNA. The L1 stalk is quite mobile in the ribosome, and is involved in E site tRNA release. Functionally, protein L1 is also a translational repressor protein, it controls the translation of the L11 operon by binding to its mRNA. The protein is Large ribosomal subunit protein uL1 of Caulobacter vibrioides (strain ATCC 19089 / CIP 103742 / CB 15) (Caulobacter crescentus).